Consider the following 629-residue polypeptide: tRNA uridine 5-carboxymethylaminomethyl modification enzyme MnmG (629 aa).

FAD contacts are provided by residues 14 to 19 (GAGHAG), valine 126, and serine 181. Position 273-287 (273-287 (GPRYCPSIEDKVVRF)) interacts with NAD(+). Glutamine 370 is an FAD binding site.

It belongs to the MnmG family. As to quaternary structure, homodimer. Heterotetramer of two MnmE and two MnmG subunits. The cofactor is FAD.

It localises to the cytoplasm. In terms of biological role, NAD-binding protein involved in the addition of a carboxymethylaminomethyl (cmnm) group at the wobble position (U34) of certain tRNAs, forming tRNA-cmnm(5)s(2)U34. In Bacillus thuringiensis (strain Al Hakam), this protein is tRNA uridine 5-carboxymethylaminomethyl modification enzyme MnmG.